The sequence spans 477 residues: MILSRRMIGSLAMTWLPFADAASETLPLRQLLRLSLFQVSVGMAQVLLLGTLNRVMILELGVPALVVAAMISIPVLVAPFRAILGHRSDTYRSALGWKRVPYLWFGSLWQMGGLALMPFSLILLSGDQTMGPAWAGEAFAGVAFLMAGVGMHMTQTAGLALAADRATEETRPQVVALLYVMFLIGMGISAVIVGWLLRDFDQITLIRVVQGCGAMTLVLNVIALWKQEVMRPMTKAEREAPRQSFREAWGLLAAETGALRLLATVMVGTLAFSMQDVLLEPYGGQVLGLKVGQTTWLTAGWAFGALVGFIWSARRLSQGAVAHRVAARGLLVGIVAFTAVLFSPLFGSKVLFFASAMGIGLGSGMFGIATLTVAMMVVVRGASGIALGAWGAAQATAAGLAVFIGGATRDLVAHAAAAGYLGSLHSPALGYTVVYVTEIGLLFITLAVLGPLVRPGSLFPKKPEAGEARIGLAEFPT.

The next 12 helical transmembrane spans lie at 31-51 (LLRL…LLGT), 60-80 (LGVP…VAPF), 103-123 (LWFG…SLIL), 130-150 (MGPA…AGVG), 177-197 (LLYV…GWLL), 205-225 (LIRV…IALW), 248-268 (AWGL…VMVG), 291-311 (VGQT…GFIW), 334-354 (IVAF…LFFA), 359-379 (IGLG…MVVV), 384-404 (GIAL…AVFI), and 433-453 (VVYV…GPLV).

This sequence belongs to the PucC family.

The protein localises to the cell membrane. This is an uncharacterized protein from Rhodobacter capsulatus (Rhodopseudomonas capsulata).